Here is a 436-residue protein sequence, read N- to C-terminus: Platelet-activating factor acetylhydrolase (436 aa).

The N-terminal stretch at 1 to 21 (MAPPKLHTLFCLSGFLALVHP) is a signal peptide. N76 and N200 each carry an N-linked (GlcNAc...) asparagine glycan. The active-site Nucleophile is the S271. D294 (charge relay system) is an active-site residue. Residue N324 is glycosylated (N-linked (GlcNAc...) asparagine). H349 serves as the catalytic Charge relay system.

This sequence belongs to the AB hydrolase superfamily. Lipase family. Post-translationally, N-glycosylated. In terms of tissue distribution, plasma.

It is found in the secreted. The protein resides in the extracellular space. It catalyses the reaction a 1-O-alkyl-2-acetyl-sn-glycero-3-phosphocholine + H2O = a 1-O-alkyl-sn-glycero-3-phosphocholine + acetate + H(+). It carries out the reaction 1-O-decyl-2-acetyl-sn-glycero-3-phosphocholine + H2O = 1-O-decyl-sn-glycero-3-phosphocholine + acetate + H(+). The enzyme catalyses 1-O-dodecyl-2-acetyl-sn-glycero-3-phosphocholine + H2O = 1-O-dodecyl-sn-glycero-3-phosphocholine + acetate + H(+). The catalysed reaction is 1-O-tetradecyl-2-acetyl-sn-glycero-3-phosphocholine + H2O = 1-O-tetradecyl-sn-glycero-3-phosphocholine + acetate + H(+). It catalyses the reaction 1-O-hexadecyl-2-acetyl-sn-glycero-3-phosphocholine + H2O = 1-O-hexadecyl-sn-glycero-3-phosphocholine + acetate + H(+). It carries out the reaction 1-O-octadecyl-2-acetyl-sn-glycero-3-phosphocholine + H2O = 1-O-octadecyl-sn-glycero-3-phosphocholine + acetate + H(+). The enzyme catalyses 1-hexadecanoyl-2-acetyl-sn-glycero-3-phosphocholine + H2O = 1-hexadecanoyl-sn-glycero-3-phosphocholine + acetate + H(+). The catalysed reaction is 1-hexadecanoyl-2-propionyl-sn-glycero-3-phosphocholine + H2O = propanoate + 1-hexadecanoyl-sn-glycero-3-phosphocholine + H(+). It catalyses the reaction 1-hexadecanoyl-2-butanoyl-sn-glycero-3-phosphocholine + H2O = butanoate + 1-hexadecanoyl-sn-glycero-3-phosphocholine + H(+). It carries out the reaction 1-hexadecanoyl-2-pentanoyl-sn-glycero-3-phosphocholine + H2O = pentanoate + 1-hexadecanoyl-sn-glycero-3-phosphocholine + H(+). The enzyme catalyses 1-hexadecanoyl-2-glutaroyl-sn-glycero-3-phosphocholine + H2O = glutarate + 1-hexadecanoyl-sn-glycero-3-phosphocholine + H(+). The catalysed reaction is 1-hexadecanoyl-2-(5-oxopentanoyl)-sn-glycero-3-phosphocholine + H2O = 5-oxopentanoate + 1-hexadecanoyl-sn-glycero-3-phosphocholine + H(+). It catalyses the reaction 1-hexadecanoyl-2-(9-oxononanoyl)-sn-glycero-3-phosphocholine + H2O = 9-oxononanoate + 1-hexadecanoyl-sn-glycero-3-phosphocholine + H(+). It carries out the reaction 1-hexadecanoyl-2-[9-hydroperoxy-(10E-octadecenoyl)]-sn-glycero-3-phosphocholine + H2O = 9-hydroperoxy-10E-octadecenoate + 1-hexadecanoyl-sn-glycero-3-phosphocholine + H(+). The enzyme catalyses 1-hexadecanoyl-2-(10-hydroperoxy-8E-octadecenoyl)-sn-glycero-3-phosphocholine + H2O = 10-hydroperoxy-(8E)-octadecenoate + 1-hexadecanoyl-sn-glycero-3-phosphocholine + H(+). Its function is as follows. Lipoprotein-associated calcium-independent phospholipase A2 involved in phospholipid catabolism during inflammatory and oxidative stress response. At the lipid-aqueous interface, hydrolyzes the ester bond of fatty acyl group attached at sn-2 position of phospholipids (phospholipase A2 activity). Specifically targets phospholipids with a short-chain fatty acyl group at sn-2 position. Can hydrolyze phospholipids with long fatty acyl chains, only if they carry oxidized functional groups. Hydrolyzes and inactivates platelet-activating factor (PAF, 1-O-alkyl-2-acetyl-sn-glycero-3-phosphocholine), a potent pro-inflammatory signaling lipid that acts through PTAFR on various innate immune cells. Hydrolyzes oxidatively truncated phospholipids carrying an aldehyde group at omega position, preventing their accumulation in lipoprotein particles and uncontrolled pro-inflammatory effects. As part of high-density lipoprotein (HDL) particles, can hydrolyze phospholipids having long-chain fatty acyl hydroperoxides at sn-2 position and protect against potential accumulation of these oxylipins in the vascular wall. Catalyzes the release from membrane phospholipids of F2-isoprostanes, lipid biomarkers of cellular oxidative damage. This chain is Platelet-activating factor acetylhydrolase (PLA2G7), found in Cavia porcellus (Guinea pig).